The following is a 300-amino-acid chain: Tyrosine recombinase XerC (300 aa).

Residues 2–88 form the Core-binding (CB) domain; that stretch reads IQEGKLEQQF…SLRSFYTFLL (87 aa). The region spanning 109 to 294 is the Tyr recombinase domain; sequence RLPKFFYSEE…TKEHLKSTYM (186 aa). Residues arginine 150, lysine 174, histidine 246, arginine 249, and histidine 272 contribute to the active site. Catalysis depends on tyrosine 281, which acts as the O-(3'-phospho-DNA)-tyrosine intermediate.

The protein belongs to the 'phage' integrase family. XerC subfamily. In terms of assembly, forms a cyclic heterotetrameric complex composed of two molecules of XerC and two molecules of XerD.

It localises to the cytoplasm. Site-specific tyrosine recombinase, which acts by catalyzing the cutting and rejoining of the recombining DNA molecules. The XerC-XerD complex is essential to convert dimers of the bacterial chromosome into monomers to permit their segregation at cell division. It also contributes to the segregational stability of plasmids. This is Tyrosine recombinase XerC from Listeria monocytogenes serotype 4b (strain F2365).